We begin with the raw amino-acid sequence, 353 residues long: Dihydroorotate dehydrogenase (quinone) (353 aa).

Residues Ala-66–Lys-70 and Thr-90 each bind FMN. A substrate-binding site is contributed by Lys-70. Residue Asn-115 to Phe-119 coordinates substrate. 2 residues coordinate FMN: Asn-143 and Asn-176. Asn-176 serves as a coordination point for substrate. Ser-179 acts as the Nucleophile in catalysis. Asn-181 is a binding site for substrate. 2 residues coordinate FMN: Lys-212 and Thr-240. Asn-241–Thr-242 lines the substrate pocket. FMN contacts are provided by residues Gly-264, Gly-293, and Tyr-314–Thr-315.

This sequence belongs to the dihydroorotate dehydrogenase family. Type 2 subfamily. In terms of assembly, monomer. Requires FMN as cofactor.

The protein resides in the cell membrane. It carries out the reaction (S)-dihydroorotate + a quinone = orotate + a quinol. It functions in the pathway pyrimidine metabolism; UMP biosynthesis via de novo pathway; orotate from (S)-dihydroorotate (quinone route): step 1/1. Catalyzes the conversion of dihydroorotate to orotate with quinone as electron acceptor. The polypeptide is Dihydroorotate dehydrogenase (quinone) (Mycolicibacterium vanbaalenii (strain DSM 7251 / JCM 13017 / BCRC 16820 / KCTC 9966 / NRRL B-24157 / PYR-1) (Mycobacterium vanbaalenii)).